The sequence spans 309 residues: UPF0282 protein Msed_0584 (309 aa).

It belongs to the UPF0282 family.

This chain is UPF0282 protein Msed_0584, found in Metallosphaera sedula (strain ATCC 51363 / DSM 5348 / JCM 9185 / NBRC 15509 / TH2).